Consider the following 236-residue polypeptide: C-&gt;U-editing enzyme APOBEC-1 (236 aa).

Residues 10–134 (GDPTLRRRIE…QQNRQGLRDL (125 aa)) enclose the CMP/dCMP-type deaminase domain. His-61 contacts Zn(2+). The active-site Proton donor is the Glu-63. 2 residues coordinate Zn(2+): Cys-93 and Cys-96.

Belongs to the cytidine and deoxycytidylate deaminase family. In terms of assembly, homodimer. Interacts with A1CF; form an mRNA editing complex. Interacts with RBM47; form an mRNA editing complex. Found in a complex with CELF2/CUGBP2 and A1CF. Interacts with HNRPAB. Interacts with SYNCRIP. The cofactor is Zn(2+). Expressed exclusively in the small intestine.

It localises to the cytoplasm. The protein localises to the nucleus. It catalyses the reaction a cytidine in mRNA + H2O + H(+) = a uridine in mRNA + NH4(+). It carries out the reaction cytidine(6666) in apoB mRNA + H2O + H(+) = uridine(6666) in apoB mRNA + NH4(+). Functionally, cytidine deaminase catalyzing the cytidine to uridine postranscriptional editing of a variety of mRNAs. Form complexes with cofactors that confer differential editing activity and selectivity. Responsible for the postranscriptional editing of a CAA codon for Gln to a UAA codon for stop in the apolipoprotein B mRNA. Also involved in CGA (Arg) to UGA (Stop) editing in the NF1 mRNA. May also play a role in the epigenetic regulation of gene expression by participating in DNA demethylation. This is C-&gt;U-editing enzyme APOBEC-1 from Homo sapiens (Human).